The chain runs to 233 residues: Cobalt-containing nitrile hydratase subunit beta (233 aa).

This sequence belongs to the nitrile hydratase subunit beta family. As to quaternary structure, heterotetramer of two alpha and two beta chains.

The enzyme catalyses an aliphatic primary amide = an aliphatic nitrile + H2O. In terms of biological role, NHase catalyzes the hydration of various nitrile compounds to the corresponding amides. The chain is Cobalt-containing nitrile hydratase subunit beta from Pseudonocardia thermophila.